Consider the following 1231-residue polypeptide: Cohesin subunit SA-2 (1231 aa).

M1 is subject to N-acetylmethionine. The segment at 1-75 (MIAAPEIPTD…GSNRMNGHHQ (75 aa)) is disordered. The segment covering 36–48 (KQGKGKTCKKGKK) has biased composition (basic residues). One can recognise an SCD domain in the interval 293-378 (FVHRYRDAIA…SRFKDRIVSM (86 aa)). K607 bears the N6-acetyllysine mark. Phosphoserine occurs at positions 1058, 1061, 1064, and 1065. The tract at residues 1062–1087 (GMSSRGSTVRSKKSKPSTGKRKVVEG) is disordered. Basic residues predominate over residues 1071 to 1082 (RSKKSKPSTGKR). T1112 is modified (phosphothreonine). 2 positions are modified to phosphoserine: S1177 and S1178.

It belongs to the SCC3 family. Interacts directly with RAD21 in cohesin complex. Cohesin complexes are composed of a heterodimer between a SMC1 protein (SMC1A or SMC1B) and SMC3, which are attached via their hinge domain, and RAD21 which link them at their heads, and one STAG protein (STAG1, STAG2 or STAG3). In cohesin complexes, STAG2 is mutually exclusive with STAG1 and STAG3. In terms of processing, phosphorylated by PLK1. The large dissociation of cohesin from chromosome arms during prophase is partly due to its phosphorylation.

It is found in the nucleus. It localises to the chromosome. The protein resides in the centromere. Functionally, component of cohesin complex, a complex required for the cohesion of sister chromatids after DNA replication. The cohesin complex apparently forms a large proteinaceous ring within which sister chromatids can be trapped. At anaphase, the complex is cleaved and dissociates from chromatin, allowing sister chromatids to segregate. The cohesin complex may also play a role in spindle pole assembly during mitosis. The protein is Cohesin subunit SA-2 (Stag2) of Mus musculus (Mouse).